The primary structure comprises 132 residues: MARVTVEDCIDKVDNRFELVLLAGHRARQISQGAQITVSRDNDKNPVVALREIADETLSPADLKEDLIHSLQKHVEVDEPEAVTEFISHSSETESVLDTSREEENCSFDYMSEEDLLAGIEGLVVPEKSDDY.

The protein belongs to the RNA polymerase subunit omega family. In terms of assembly, the RNAP catalytic core consists of 2 alpha, 1 beta, 1 beta' and 1 omega subunit. When a sigma factor is associated with the core the holoenzyme is formed, which can initiate transcription.

The catalysed reaction is RNA(n) + a ribonucleoside 5'-triphosphate = RNA(n+1) + diphosphate. Functionally, promotes RNA polymerase assembly. Latches the N- and C-terminal regions of the beta' subunit thereby facilitating its interaction with the beta and alpha subunits. The protein is DNA-directed RNA polymerase subunit omega of Bartonella bacilliformis (strain ATCC 35685 / KC583 / Herrer 020/F12,63).